Consider the following 473-residue polypeptide: Cysteine--tRNA ligase (473 aa).

Position 28 (Cys28) interacts with Zn(2+). The 'HIGH' region motif lies at 30–40; it reads MTVYDFCHIGH. Cys212, His237, and Glu241 together coordinate Zn(2+). The 'KMSKS' region motif lies at 277–281; the sequence is KMSKS. Lys280 is a binding site for ATP.

Belongs to the class-I aminoacyl-tRNA synthetase family. Monomer. The cofactor is Zn(2+).

It localises to the cytoplasm. It carries out the reaction tRNA(Cys) + L-cysteine + ATP = L-cysteinyl-tRNA(Cys) + AMP + diphosphate. This chain is Cysteine--tRNA ligase, found in Polynucleobacter asymbioticus (strain DSM 18221 / CIP 109841 / QLW-P1DMWA-1) (Polynucleobacter necessarius subsp. asymbioticus).